The following is a 34-amino-acid chain: Cytochrome b6-f complex subunit 7 (34 aa).

The helical transmembrane segment at 9–27 threads the bilayer; it reads AILSFGLIFVGWGLGALLL.

The protein belongs to the PetM family. In terms of assembly, the 4 large subunits of the cytochrome b6-f complex are cytochrome b6, subunit IV (17 kDa polypeptide, PetD), cytochrome f and the Rieske protein, while the 4 small subunits are PetG, PetL, PetM and PetN. The complex functions as a dimer.

Its subcellular location is the cellular thylakoid membrane. In terms of biological role, component of the cytochrome b6-f complex, which mediates electron transfer between photosystem II (PSII) and photosystem I (PSI), cyclic electron flow around PSI, and state transitions. The protein is Cytochrome b6-f complex subunit 7 of Nostoc punctiforme (strain ATCC 29133 / PCC 73102).